A 450-amino-acid chain; its full sequence is Phosphoglucosamine mutase (450 aa).

The Phosphoserine intermediate role is filled by serine 101. Residues serine 101, aspartate 241, aspartate 243, and aspartate 245 each contribute to the Mg(2+) site. Serine 101 bears the Phosphoserine mark.

Belongs to the phosphohexose mutase family. Requires Mg(2+) as cofactor. In terms of processing, activated by phosphorylation.

It carries out the reaction alpha-D-glucosamine 1-phosphate = D-glucosamine 6-phosphate. Functionally, catalyzes the conversion of glucosamine-6-phosphate to glucosamine-1-phosphate. The protein is Phosphoglucosamine mutase of Listeria monocytogenes serotype 4b (strain F2365).